The following is a 387-amino-acid chain: 3-ketoacyl-CoA thiolase (387 aa).

The active-site Acyl-thioester intermediate is the Cys91. Active-site proton acceptor residues include His343 and Cys373.

The protein belongs to the thiolase-like superfamily. Thiolase family. In terms of assembly, heterotetramer of two alpha chains (FadB) and two beta chains (FadA).

Its subcellular location is the cytoplasm. The enzyme catalyses an acyl-CoA + acetyl-CoA = a 3-oxoacyl-CoA + CoA. It participates in lipid metabolism; fatty acid beta-oxidation. Its function is as follows. Catalyzes the final step of fatty acid oxidation in which acetyl-CoA is released and the CoA ester of a fatty acid two carbons shorter is formed. The polypeptide is 3-ketoacyl-CoA thiolase (Aliivibrio fischeri (strain ATCC 700601 / ES114) (Vibrio fischeri)).